The sequence spans 180 residues: Peroxisome assembly protein 22 (180 aa).

A helical membrane pass occupies residues 15–32 (LGIVGTAIAVLVTSYYIY).

Belongs to the peroxin-22 family.

It localises to the peroxisome membrane. In terms of biological role, involved in peroxisome biogenesis. This is Peroxisome assembly protein 22 (PEX22) from Saccharomyces cerevisiae (strain ATCC 204508 / S288c) (Baker's yeast).